The primary structure comprises 479 residues: Adenosylhomocysteinase (479 aa).

Substrate-binding residues include threonine 66, aspartate 142, and glutamate 203. Residue 204-206 coordinates NAD(+); it reads TTT. Residues lysine 233 and aspartate 237 each contribute to the substrate site. NAD(+)-binding positions include asparagine 238, 267 to 272, glutamate 290, asparagine 325, 346 to 348, and asparagine 394; these read GYGDVG and IGH.

This sequence belongs to the adenosylhomocysteinase family. It depends on NAD(+) as a cofactor.

The protein resides in the cytoplasm. It carries out the reaction S-adenosyl-L-homocysteine + H2O = L-homocysteine + adenosine. It functions in the pathway amino-acid biosynthesis; L-homocysteine biosynthesis; L-homocysteine from S-adenosyl-L-homocysteine: step 1/1. In terms of biological role, may play a key role in the regulation of the intracellular concentration of adenosylhomocysteine. This Nitratidesulfovibrio vulgaris (strain ATCC 29579 / DSM 644 / CCUG 34227 / NCIMB 8303 / VKM B-1760 / Hildenborough) (Desulfovibrio vulgaris) protein is Adenosylhomocysteinase.